The sequence spans 247 residues: Probable membrane transporter protein y4hK (247 aa).

A run of 6 helical transmembrane segments spans residues 5–25 (AIGLAIAFFVIALAYAAVGQA), 31–51 (IAAMALSGFSPLAIKPTALAL), 74–94 (VYPFAILGFPASALGGSVHLP), 121–141 (SALVITIPKTPPLHAALITGA), 202–222 (FLPWWLIAVAAGGSIGALIGS), and 227–247 (ASWLRVILSVLLMVSGLKLLW).

Belongs to the 4-toluene sulfonate uptake permease (TSUP) (TC 2.A.102) family.

It is found in the cell membrane. This chain is Probable membrane transporter protein y4hK, found in Sinorhizobium fredii (strain NBRC 101917 / NGR234).